Here is an 87-residue protein sequence, read N- to C-terminus: Acylphosphatase (87 aa).

An Acylphosphatase-like domain is found at 2–87 (RLTALVSGHV…ETGLREFHIY (86 aa)). Catalysis depends on residues R17 and N35.

This sequence belongs to the acylphosphatase family.

The enzyme catalyses an acyl phosphate + H2O = a carboxylate + phosphate + H(+). In Deinococcus radiodurans (strain ATCC 13939 / DSM 20539 / JCM 16871 / CCUG 27074 / LMG 4051 / NBRC 15346 / NCIMB 9279 / VKM B-1422 / R1), this protein is Acylphosphatase (acyP).